The following is a 112-amino-acid chain: 2Fe-2S ferredoxin (112 aa).

The 103-residue stretch at 5–107 folds into the 2Fe-2S ferredoxin-type domain; the sequence is IKVTFIINDG…GIKVRLPSAT (103 aa). The [2Fe-2S] cluster site is built by Cys42, Cys48, Cys51, and Cys88.

Belongs to the adrenodoxin/putidaredoxin family. Requires [2Fe-2S] cluster as cofactor.

Functionally, ferredoxin are iron-sulfur proteins that transfer electrons in a wide variety of metabolic reactions. The protein is 2Fe-2S ferredoxin (fdxB) of Rickettsia montanensis.